The primary structure comprises 82 residues: Small ribosomal subunit protein bS16c (82 aa).

The protein belongs to the bacterial ribosomal protein bS16 family.

It is found in the plastid. It localises to the chloroplast. The protein is Small ribosomal subunit protein bS16c of Pyropia yezoensis (Susabi-nori).